We begin with the raw amino-acid sequence, 319 residues long: GTP 3',8-cyclase (319 aa).

The region spanning 4–227 (KHGRKINYLR…VETDKSSTAL (224 aa)) is the Radical SAM core domain. A GTP-binding site is contributed by Arg13. [4Fe-4S] cluster contacts are provided by Cys20 and Cys24. Tyr26 is a binding site for S-adenosyl-L-methionine. A [4Fe-4S] cluster-binding site is contributed by Cys27. Residue Arg63 coordinates GTP. S-adenosyl-L-methionine is bound at residue Gly67. Thr94 contributes to the GTP binding site. Ser118 provides a ligand contact to S-adenosyl-L-methionine. Lys155 contacts GTP. Met189 contributes to the S-adenosyl-L-methionine binding site. The [4Fe-4S] cluster site is built by Cys249 and Cys252. GTP is bound at residue 254–256 (RVR). Cys266 contacts [4Fe-4S] cluster.

Belongs to the radical SAM superfamily. MoaA family. As to quaternary structure, monomer and homodimer. Requires [4Fe-4S] cluster as cofactor.

It carries out the reaction GTP + AH2 + S-adenosyl-L-methionine = (8S)-3',8-cyclo-7,8-dihydroguanosine 5'-triphosphate + 5'-deoxyadenosine + L-methionine + A + H(+). It functions in the pathway cofactor biosynthesis; molybdopterin biosynthesis. Functionally, catalyzes the cyclization of GTP to (8S)-3',8-cyclo-7,8-dihydroguanosine 5'-triphosphate. The polypeptide is GTP 3',8-cyclase (Clostridium botulinum (strain Langeland / NCTC 10281 / Type F)).